The following is a 703-amino-acid chain: Cyclomaltodextrin glucanotransferase (703 aa).

The first 29 residues, 1 to 29, serve as a signal peptide directing secretion; it reads MNDLNDFLKTILLSFIFFLLLSLPTVAEA. Residues 30–160 are A1; sequence DVTNKVNYSK…GIKVIMDFTP (131 aa). Ca(2+)-binding residues include D52, N54, N57, and N58. C68 and C75 are oxidised to a cystine. Ca(2+) is bound by residues G76 and D78. 122 to 123 contacts substrate; the sequence is YW. N161 contributes to the Ca(2+) binding site. The b stretch occupies residues 161 to 224; the sequence is NHSSPALETN…NLYDLADYDL (64 aa). H162 contacts substrate. I212 provides a ligand contact to Ca(2+). A substrate-binding site is contributed by 215 to 218; that stretch reads NLYD. Residue D221 coordinates Ca(2+). Positions 225–428 are A2; the sequence is NNTVMDQYLK…LRQTNSALGY (204 aa). R249 contacts substrate. D251 serves as the catalytic Nucleophile. Position 254–255 (254–255) interacts with substrate; the sequence is KH. H255 is a Ca(2+) binding site. E279 serves as the catalytic Proton donor. Substrate contacts are provided by H349, D393, and R397. Residues 429-516 form a c region; that stretch reads GTTTERWLNE…SVAVWQVSNP (88 aa). Positions 517–600 are d; that stretch reads STSPLIGQVG…SPTYKEFEVL (84 aa). The region spanning 520–598 is the IPT/TIG domain; sequence PLIGQVGPMM…IKSPTYKEFE (79 aa). Residues 599 to 703 form the CBM20 domain; it reads VLSGNQVSVR…TGTDTVMINW (105 aa). Residues 601 to 703 form an e region; the sequence is SGNQVSVRFG…TGTDTVMINW (103 aa).

The protein belongs to the glycosyl hydrolase 13 family. As to quaternary structure, monomer. The cofactor is Ca(2+).

Its subcellular location is the secreted. It carries out the reaction Cyclizes part of a (1-&gt;4)-alpha-D-glucan chain by formation of a (1-&gt;4)-alpha-D-glucosidic bond.. The protein is Cyclomaltodextrin glucanotransferase (cgt) of Bacillus sp. (strain 1-1).